The following is a 425-amino-acid chain: Serine--tRNA ligase (425 aa).

230 to 232 (TAE) is an L-serine binding site. Residue 261-263 (RSE) coordinates ATP. L-serine is bound at residue glutamate 284. 348–351 (EISS) is an ATP binding site. Serine 384 lines the L-serine pocket.

It belongs to the class-II aminoacyl-tRNA synthetase family. Type-1 seryl-tRNA synthetase subfamily. In terms of assembly, homodimer. The tRNA molecule binds across the dimer.

It is found in the cytoplasm. The catalysed reaction is tRNA(Ser) + L-serine + ATP = L-seryl-tRNA(Ser) + AMP + diphosphate + H(+). It carries out the reaction tRNA(Sec) + L-serine + ATP = L-seryl-tRNA(Sec) + AMP + diphosphate + H(+). Its pathway is aminoacyl-tRNA biosynthesis; selenocysteinyl-tRNA(Sec) biosynthesis; L-seryl-tRNA(Sec) from L-serine and tRNA(Sec): step 1/1. Functionally, catalyzes the attachment of serine to tRNA(Ser). Is also able to aminoacylate tRNA(Sec) with serine, to form the misacylated tRNA L-seryl-tRNA(Sec), which will be further converted into selenocysteinyl-tRNA(Sec). The protein is Serine--tRNA ligase of Streptococcus agalactiae serotype Ia (strain ATCC 27591 / A909 / CDC SS700).